The sequence spans 531 residues: SWI/SNF-related matrix-associated actin-dependent regulator of chromatin subfamily D member 2 (531 aa).

The disordered stretch occupies residues 20 to 85; sequence AVAAALGAPP…MSPGSRMPMA (66 aa). The span at 34–45 shows a compositional bias: low complexity; that stretch reads PGMLPNPALRGP. Asymmetric dimethylarginine occurs at positions 81 and 104. Residues 202 to 226 form a disordered region; sequence FSPSKADGDNSGTAGTPGGTPAADK. S203 carries the phosphoserine modification. T217 is subject to Phosphothreonine. Residue K226 forms a Glycyl lysine isopeptide (Lys-Gly) (interchain with G-Cter in SUMO2) linkage. The region spanning 306-383 is the SWIB/MDM2 domain; that stretch reads HQPPQYKLDP…PMKLAGLLQH (78 aa).

The protein belongs to the SMARCD family. Component of the multiprotein chromatin-remodeling complexes SWI/SNF: SWI/SNF-A (BAF), SWI/SNF-B (PBAF) and related complexes. The canonical complex contains a catalytic subunit (either SMARCA4/BRG1/BAF190A or SMARCA2/BRM/BAF190B), and at least SMARCE1, ACTL6A/BAF53, SMARCC1/BAF155, SMARCC2/BAF170, and SMARCB1/SNF5/BAF47. Other subunits specific to each of the complexes may also be present permitting several possible combinations developmentally and tissue specific. Component of the BAF complex, which includes at least actin (ACTB), ARID1A/BAF250A, ARID1B/BAF250B, SMARCA2/BRM, SMARCA4/BRG1, ACTL6A/BAF53, ACTL6B/BAF53B, SMARCE1/BAF57, SMARCC1/BAF155, SMARCC2/BAF170, SMARCB1/SNF5/INI1, and one or more SMARCD1/BAF60A, SMARCD2/BAF60B, or SMARCD3/BAF60C. In muscle cells, the BAF complex also contains DPF3. Component of the SWI/SNF-B (PBAF) chromatin remodeling complex, at least composed of SMARCA4/BRG1, SMARCB1/BAF47/SNF5, ACTL6A/BAF53A or ACTL6B/BAF53B, SMARCE1/BAF57, SMARCD1/BAF60A, SMARCD2/BAF60B, perhaps SMARCD3/BAF60C, SMARCC1/BAF155, SMARCC2/BAF170, PBRM1/BAF180, ARID2/BAF200 and actin (ACTB). Interacts with UNKL. Interacts with CEBPE. Post-translationally, ubiquitinated through a signaling process involving RAC1 and the RING finger protein UNKL.

Its subcellular location is the nucleus. Its function is as follows. Involved in transcriptional activation and repression of select genes by chromatin remodeling (alteration of DNA-nucleosome topology). Component of SWI/SNF chromatin remodeling complexes that carry out key enzymatic activities, changing chromatin structure by altering DNA-histone contacts within a nucleosome in an ATP-dependent manner. Critical regulator of myeloid differentiation, controlling granulocytopoiesis and the expression of genes involved in neutrophil granule formation. The sequence is that of SWI/SNF-related matrix-associated actin-dependent regulator of chromatin subfamily D member 2 (Smarcd2) from Rattus norvegicus (Rat).